A 301-amino-acid chain; its full sequence is UstYa family oxidase phomYd (301 aa).

The tract at residues 1 to 26 (MEKFFSPSRHNYADLSPTDVPASEES) is disordered. A helical membrane pass occupies residues 47 to 69 (VLVNRLLAASTVALVMVSLWLGW). 2 consecutive short sequence motifs (HXXHC) follow at residues 189–194 (THSVHC) and 218–222 (HTDHC). Asn-275 carries N-linked (GlcNAc...) asparagine glycosylation.

It belongs to the ustYa family.

It is found in the membrane. It participates in mycotoxin biosynthesis. Its function is as follows. UstYa family oxidase; part of the gene cluster that mediates the biosynthesis of the phomopsins, a group of hexapeptide mycotoxins which infects lupins and causes lupinosis disease in livestock. Within the pathway, phomYd catalyzes the desaturation of the Asp moiety into 2,3-dehydroaspartic acid (dAsp). The pathway starts with the processing of the precursor phomA by several endopeptidases including kexin proteases as well as the cluster-specific S41 family peptidase phomP1 and the oligopeptidase phomG to produce 10 identical copies of the hexapeptide Tyr-Val-Ile-Pro-Ile-Asp. After being excised from the precursor peptide, the core peptides are cyclized and modified post-translationally by enzymes encoded within the gene cluster. The timing and order of proteolysis of the phomA precursor and PTMs are still unknown. Two tyrosinase-like enzymes, phomQ1 and phomQ2, catalyze the chlorination and hydroxylation of Tyr, respectively. PhomYb, is proposed to be involved in the construction of the macrocyclic structure. The other 4 ustYa family proteins may be involved in PTMs that generate the unique structure of phomopsin A. PhomYa is required for the hydroxylation of C-beta of Tyr. PhomYc, phomYd, and phomYe are responsible for the biosynthesis of 2,3-dehydroisoleucine (dIle), 2,3-dehydroaspartic acid (dAsp), and 3,4-dehydroproline (dPro), respectively. While dIle formation by phomYc is indispensable for the installation of dAsp by phomYd, the order of the other PTMs have not been elucidated yet. Most of the biosynthetic enzymes likely have broad substrate specificity, and thus, there might be a metabolic grid from a precursor to phomopsin A. The enzyme(s) responsible for the biosynthesis of 3,4-dehydrovaline (dVal) have also not been identified yet. Finally, phomM acts as an S-adenosylmethionine-dependent alpha-N-methyltransferase that catalyzes two successive N-methylation reactions, converting N-desmethyl-phomopsin A to phomopsin A and phomopsin A further to an N,N-dimethylated congener called phomopsin E. The protein is UstYa family oxidase phomYd of Diaporthe leptostromiformis (Lupinosis disease fungus).